Here is a 179-residue protein sequence, read N- to C-terminus: Large ribosomal subunit protein bL17 (179 aa).

Residues 123-179 (RTRGTDTLPDTVTDTGPDSAPDPVPGSEPGSAAGDLPDADTAPADPGESSSNQRVIR) are disordered. The span at 154 to 168 (AAGDLPDADTAPADP) shows a compositional bias: low complexity. Positions 170-179 (ESSSNQRVIR) are enriched in polar residues.

It belongs to the bacterial ribosomal protein bL17 family. In terms of assembly, part of the 50S ribosomal subunit. Contacts protein L32.

In Tropheryma whipplei (strain Twist) (Whipple's bacillus), this protein is Large ribosomal subunit protein bL17.